Consider the following 85-residue polypeptide: MDPKKIARINELAKKKKTEGLTPEEKVEQAKLREEYIEGYRRAVRHHIEGIKIVDEKGNDVTPEKLRQVQREKGLHGRSLDDPNS.

Residues 62–85 (TPEKLRQVQREKGLHGRSLDDPNS) form a disordered region.

This sequence belongs to the UPF0291 family.

The protein localises to the cytoplasm. The sequence is that of UPF0291 protein SPH_1589 from Streptococcus pneumoniae (strain Hungary19A-6).